The following is a 377-amino-acid chain: Membrane protein MLC1 (377 aa).

The span at 1–23 (MTQEPFREELAYDRMPTLERGRQ) shows a compositional bias: basic and acidic residues. Residues 1-36 (MTQEPFREELAYDRMPTLERGRQDPASYAPDAKPSD) are disordered. Helical transmembrane passes span 52–72 (WVFS…SLYL), 82–100 (YLRC…SFTV), 111–131 (FQIL…WFGC), and 144–164 (FNLI…IIAA). Phosphoserine occurs at positions 177 and 179. The next 4 membrane-spanning stretches (helical) occupy residues 199–219 (SVVE…ALNV), 230–250 (VTFF…HVAA), 257–277 (LVEV…TASG), and 304–324 (LLLL…GTAI).

In terms of assembly, interacts with ATP1B1. Part of a complex containing ATP1B1, TRPV4, AQP4 and HEPACAM. Expressed in the brain, with highest levels found in the amygdala, nucleus caudatus, thalamus and hippocampus.

Its subcellular location is the membrane. It is found in the cell membrane. The protein resides in the cytoplasm. It localises to the perinuclear region. The protein localises to the endoplasmic reticulum. Its function is as follows. Transmembrane protein mainly expressed in brain astrocytes that may play a role in transport across the blood-brain and brain-cerebrospinal fluid barriers. Regulates the response of astrocytes to hypo-osmosis by promoting calcium influx. May function as regulatory protein of membrane protein complexes such as ion channels. In Homo sapiens (Human), this protein is Membrane protein MLC1.